The sequence spans 144 residues: Granulocyte-macrophage colony-stimulating factor (144 aa).

The N-terminal stretch at 1 to 17 (MWLQSLLLLGTVACSIS) is a signal peptide. Residues S22, S24, and S26 are each glycosylated (O-linked (GalNAc...) serine). T27 is a glycosylation site (O-linked (GalNAc...) threonine; partial). N-linked (GlcNAc...) asparagine glycosylation is found at N44 and N54. 2 cysteine pairs are disulfide-bonded: C71-C113 and C105-C138.

It belongs to the GM-CSF family. In terms of assembly, monomer. The signaling GM-CSF receptor complex is a dodecamer of two head-to-head hexamers of two alpha, two beta, and two ligand subunits.

Its subcellular location is the secreted. Its function is as follows. Cytokine that stimulates the growth and differentiation of hematopoietic precursor cells from various lineages, including granulocytes, macrophages, eosinophils and erythrocytes. This is Granulocyte-macrophage colony-stimulating factor (CSF2) from Homo sapiens (Human).